We begin with the raw amino-acid sequence, 100 residues long: Aspartyl/glutamyl-tRNA(Asn/Gln) amidotransferase subunit C (100 aa).

The protein belongs to the GatC family. As to quaternary structure, heterotrimer of A, B and C subunits.

The enzyme catalyses L-glutamyl-tRNA(Gln) + L-glutamine + ATP + H2O = L-glutaminyl-tRNA(Gln) + L-glutamate + ADP + phosphate + H(+). The catalysed reaction is L-aspartyl-tRNA(Asn) + L-glutamine + ATP + H2O = L-asparaginyl-tRNA(Asn) + L-glutamate + ADP + phosphate + 2 H(+). In terms of biological role, allows the formation of correctly charged Asn-tRNA(Asn) or Gln-tRNA(Gln) through the transamidation of misacylated Asp-tRNA(Asn) or Glu-tRNA(Gln) in organisms which lack either or both of asparaginyl-tRNA or glutaminyl-tRNA synthetases. The reaction takes place in the presence of glutamine and ATP through an activated phospho-Asp-tRNA(Asn) or phospho-Glu-tRNA(Gln). The sequence is that of Aspartyl/glutamyl-tRNA(Asn/Gln) amidotransferase subunit C from Streptococcus pneumoniae serotype 19F (strain G54).